Reading from the N-terminus, the 929-residue chain is DVEIFAVGVKDAVRSELEAIATPPTATHVYTVEDFDAFQRISFELTQSIWLRIEQELKSIKVKSLTPPRDLSFAEVTSSSFRVSWSPAAEDAIAYLVNYTVALGGEEFVVSVPAPTTSTVLTNLFPKTTYEVRVVAEYPEGESPPLKGEETTLEVRGAPRNLRVTDETTDSFKVGWTPAPGNVLRYRIAYRPVAGGERKEVTVQGNERATTLYNLFPDTKYHVSGVPEYQSGPGTALNGNGATEEVVGEPKNLRVSEPTTSTAMRLTWDKAPGKVQRYLRNLHSRSAGGDIKEVTVKGDTSTTVLKELDPGTAYTLSVNPLYASGAGTAVTGEGATLQERGSPRDLIIKDITDTTIGTSWTAAPGMVRGYRIAWQSLFDDKTGENHVPGDTTNTVLRNLDPETKYRLSVYANYASGEGDPLSGEATTEASPDGKIVKISEETETTMKATWQPAPGNVLNYRVVYRPRAGGRQIVAKVPPAVTSTVLRRLTPLTTYDISVIPVYKEGDGKTRQGSGTTLSPFNAPRSIKTSEPTRSTFRVTWEPAPGEVKGYKITFHPEGDDGYLGEMMVGPYDSTVVLEELRARTSYKVNVFGVFDDGQSPPLIGHETTTLRDAPRSPIPSSGLDCTTKAQADIVLLVDGSWSIGRPNFKIVRNFISRVVEVFDIGSDRVQIAVSQYSGDPRTEWQLNTHKTKKSLMDAVANLPYKGGNTNTGSALKFILENNFRPGVGMREKARKIAILLTDGKSQDDIVAPSKRYADEGIELYAVGIKNADENELKEIASDPDELYMYNVADFSLLTNIVNDLTENVCNSVKGPGGLNPPSNLVTSEPTPRSFRVTWVPPSQSVERFKVEYYPVAGGRPQEVYVRGTQTTTVLVGLKPETEYYVNVYSVEGNEISEPLAGTETTLPIPSVRNMNLYDIGTTTMRVKW.

In terms of domain architecture, VWFA 1 spans 1-49 (DVEIFAVGVKDAVRSELEAIATPPTATHVYTVEDFDAFQRISFELTQSI). Fibronectin type-III domains lie at 67 to 156 (PPRD…LEVR), 158 to 250 (APRN…VGEP), 251 to 340 (KNLR…LQER), 342 to 432 (SPRD…ASPD), 434 to 521 (KIVK…LSPF), and 523 to 613 (APRS…TLRD). An N-linked (GlcNAc...) asparagine glycan is attached at asparagine 98. 3 O-linked (Xyl...) (chondroitin sulfate) serine glycosylation sites follow: serine 231, serine 324, and serine 415. A VWFA 2 domain is found at 633–805 (DIVLLVDGSW…SLLTNIVNDL (173 aa)). One can recognise a Fibronectin type-III 7 domain in the interval 821-910 (PPSNLVTSEP…AGTETTLPIP (90 aa)).

The protein belongs to the fibril-associated collagens with interrupted helices (FACIT) family. Trimer of identical chains each containing 190 kDa of non-triple-helical sequences. Post-translationally, the triple-helical tail is stabilized by disulfide bonds at each end. In terms of processing, prolines at the third position of the tripeptide repeating unit (G-X-Y) are hydroxylated in some or all of the chains.

The protein resides in the secreted. Its subcellular location is the extracellular space. It is found in the extracellular matrix. Type XII collagen interacts with type I collagen-containing fibrils, the COL1 domain could be associated with the surface of the fibrils, and the COL2 and NC3 domains may be localized in the perifibrillar matrix. Could play a developmental role in regeneration. In Notophthalmus viridescens (Eastern newt), this protein is Collagen alpha-1(XII) chain.